Here is a 405-residue protein sequence, read N- to C-terminus: Squamosa promoter-binding-like protein 6 (405 aa).

Residues 121–198 form an SBP-type zinc finger; sequence NPLCQVYGCS…AGHNERRRKP (78 aa). Positions 124, 129, 146, 149, 165, 168, 172, and 184 each coordinate Zn(2+). A Bipartite nuclear localization signal motif is present at residues 181 to 197; it reads KRSCRRRLAGHNERRRK.

Zn(2+) is required as a cofactor.

Its subcellular location is the nucleus. In terms of biological role, trans-acting factor that binds specifically to the consensus nucleotide sequence 5'-TNCGTACAA-3'. This chain is Squamosa promoter-binding-like protein 6 (SPL6), found in Arabidopsis thaliana (Mouse-ear cress).